Here is a 172-residue protein sequence, read N- to C-terminus: RNA silencing suppressor p19 (172 aa).

Residues 1 to 20 (MERAIQGNDTREQANGERWD) show a composition bias toward basic and acidic residues. Positions 1–27 (MERAIQGNDTREQANGERWDGGSGGIT) are disordered.

It belongs to the tombusvirus protein p19 family. Homodimer.

Its function is as follows. Acts as a suppressor of RNA-mediated gene silencing, also known as post-transcriptional gene silencing (PTGS), a mechanism of plant viral defense that limits the accumulation of viral RNAs. Binds to short interfering RNAs (siRNAs) with high affinity. Acts as a molecular caliper to specifically select siRNAs based on the length of the duplex region of the RNA. This chain is RNA silencing suppressor p19, found in Dianthus caryophyllus (Carnation).